The chain runs to 317 residues: Succinate receptor 1 (317 aa).

The Extracellular segment spans residues 1-27 (MAQNLSCENWLALENILKKYYLSAFYG). The N-linked (GlcNAc...) asparagine glycan is linked to Asn-4. The helical transmembrane segment at 28-48 (IEFIVGMLGNFTVVFGYLFCM) threads the bilayer. At 49–55 (KNWNSSN) the chain is on the cytoplasmic side. Residues 56–76 (VYLFNLSISDLAFLCTLPMLI) form a helical membrane-spanning segment. Residues 77 to 99 (RSYATGNWTYGDVLCISNRYVLH) lie on the Extracellular side of the membrane. Residues Cys-91 and Cys-168 are joined by a disulfide bond. A helical membrane pass occupies residues 100-120 (ANLYTSILFLTFISIDRYLLM). Over 121–133 (KFPFREHILQKKE) the chain is Cytoplasmic. The helical transmembrane segment at 134 to 154 (FAILISLAVWVLVTLEVLPML) threads the bilayer. Residues 155-181 (TFITSTPIEKGDSCVDYASSGNPKYSL) lie on the Extracellular side of the membrane. Residues 182–202 (IYSLCLTLLGFLIPLSVMCFF) form a helical membrane-spanning segment. Residues 203 to 226 (YYKMVVFLKKRSQQQATVLSLNKP) lie on the Cytoplasmic side of the membrane. The helical transmembrane segment at 227–247 (LRLVVLAVVIFSVLFTPYHIM) threads the bilayer. Topologically, residues 248-276 (RNVRIASRLDSWPQGCSQKAIKCLYILTR) are extracellular. Residues 277–297 (PLAFLNSAVNPIFYFLVGDHF) form a helical membrane-spanning segment. Topologically, residues 298–317 (RDMLFSKLRQYFKSLTSFRL) are cytoplasmic.

This sequence belongs to the G-protein coupled receptor 1 family. As to expression, expressed in retina.

The protein localises to the cell membrane. Functionally, g protein-coupled receptor for succinate able to mediate signaling through Gq/GNAQ or Gi/GNAI second messengers depending on the cell type and the processes regulated. Succinate-SUCNR1 signaling serves as a link between metabolic stress, inflammation and energy homeostasisn. In macrophages, plays a range of immune-regulatory roles. During inflammation, succinate-SUCNR1 signaling may act as an anti-inflammatory mediator or boost inflammation depending on the inflammatory status of cells. Hyperpolarizes M2 macrophages versus M1 phenotype through Gq signaling by regulating the transcription of genes involved in immune function. In activated M1 macrophages, plays a pro-inflammatory role in response to LPS. Expressed in dendritic cells, where it is involved in the sensing of immunological danger and enhances immunity. Mediates succinate triggered intracelleular calcium mobilization, induces migratory responses and acts in synergy with Toll-like receptor ligands for the production of proinflammatory cytokines as well as an enhancement of antigen-specific activation of helper T cells. In the small intestine, mediates the activation of tuft cells by dietary succinate and triggers type 2 immunity. In adipocytes, plays an important role in the control of energy metabolism. In response to succinate, controls leptin expression in an AMPK-JNK-CEBPA-dependent as well as circadian clock-regulated manner. In muscle tissue, is expressed in non-muscle cells and coordinates muscle remodeling in response to the succinate produced during exercise training in a paracrine manner. In retina, acts as a mediator of vessel growth during retinal development. In response to succinate, regulates the production of angiogenic factors, including VEGF, by retinal ganglion neurons. The sequence is that of Succinate receptor 1 (Sucnr1) from Rattus norvegicus (Rat).